The chain runs to 593 residues: Tyrosine-protein phosphatase non-receptor type 11 (593 aa).

SH2 domains follow at residues 6–102 (WFHP…KYPL) and 112–216 (WFHG…KQPL). The region spanning 247–521 (FWEEFETLQQ…RFIYMAVQHY (275 aa)) is the Tyrosine-protein phosphatase domain. Residues D425, 459-465 (CSAGIGR), and Q506 each bind substrate. C459 (phosphocysteine intermediate) is an active-site residue. Residues 548–557 (SLSDQTSGDQ) are compositionally biased toward polar residues. Positions 548–575 (SLSDQTSGDQSPLPPCTPTPTCPEMRED) are disordered. Pro residues predominate over residues 559-568 (PLPPCTPTPT).

The protein belongs to the protein-tyrosine phosphatase family. Non-receptor class 2 subfamily. Post-translationally, phosphorylated by tyrosine-protein kinases. Expressed in embryonic fibroblast, hematopoietic, erythroid, myeloid and lymphoid cells.

It is found in the cytoplasm. It catalyses the reaction O-phospho-L-tyrosyl-[protein] + H2O = L-tyrosyl-[protein] + phosphate. This PTPase activity may directly link growth factor receptors and other signaling proteins through protein-tyrosine phosphorylation. The SH2 regions may interact with other cellular components to modulate its own phosphatase activity against interacting substrates. May play a positive role during the stages of erythroid cell proliferation. The protein is Tyrosine-protein phosphatase non-receptor type 11 (PTPN11) of Gallus gallus (Chicken).